We begin with the raw amino-acid sequence, 80 residues long: Cell division activator CedA (80 aa).

This sequence belongs to the CedA family.

In terms of biological role, activates the cell division inhibited by chromosomal DNA over-replication. This is Cell division activator CedA from Escherichia coli (strain SMS-3-5 / SECEC).